The chain runs to 68 residues: Copper transport protein ATOX1 (68 aa).

Residues 1 to 63 (MPKHEFSVDM…TLKKTGKTVS (63 aa)) form the HMA domain. Residues Cys-12 and Cys-15 each coordinate Cu cation. Ser-47 bears the Phosphoserine mark. Residue Lys-60 is modified to N6-acetyllysine.

The protein belongs to the ATX1 family. As to quaternary structure, homodimer. Interacts with ATP7B. Interacts with ATP7A. Interacts (via dimer form) with SLC31A1 (via C-terminal domain); this interaction improves ATOX1 stability and controls intracellular Cu(I) levels. Ubiquitous.

Its function is as follows. Binds and deliver cytosolic copper to the copper ATPase proteins. May be important in cellular antioxidant defense. This chain is Copper transport protein ATOX1, found in Homo sapiens (Human).